Here is a 450-residue protein sequence, read N- to C-terminus: 5-amino-6-(D-ribitylamino)uracil--L-tyrosine 4-hydroxyphenyl transferase (450 aa).

Residues 1–24 (MPDVPETVGTPDGSTEFEHRPTTD) are disordered. The Radical SAM core domain occupies 82 to 350 (VTFVANLNNN…MIAVSRLFLD (269 aa)). The [4Fe-4S] cluster site is built by Cys-96, Cys-100, and Cys-103. Residues 430-450 (PDADVLGPQLGPRADGTPLLD) are disordered.

It belongs to the radical SAM superfamily. CofH family. Consists of two subunits, CofG and CofH. [4Fe-4S] cluster is required as a cofactor.

It carries out the reaction 5-amino-6-(D-ribitylamino)uracil + L-tyrosine + S-adenosyl-L-methionine = 5-amino-5-(4-hydroxybenzyl)-6-(D-ribitylimino)-5,6-dihydrouracil + 2-iminoacetate + 5'-deoxyadenosine + L-methionine + H(+). Its pathway is cofactor biosynthesis; coenzyme F0 biosynthesis. Its function is as follows. Catalyzes the radical-mediated synthesis of 5-amino-5-(4-hydroxybenzyl)-6-(D-ribitylimino)-5,6-dihydrouracil from 5-amino-6-(D-ribitylamino)uracil and L-tyrosine. The protein is 5-amino-6-(D-ribitylamino)uracil--L-tyrosine 4-hydroxyphenyl transferase of Haloarcula marismortui (strain ATCC 43049 / DSM 3752 / JCM 8966 / VKM B-1809) (Halobacterium marismortui).